Consider the following 229-residue polypeptide: Uracil-DNA glycosylase (229 aa).

Catalysis depends on Asp-65, which acts as the Proton acceptor.

This sequence belongs to the uracil-DNA glycosylase (UDG) superfamily. UNG family.

It is found in the cytoplasm. It catalyses the reaction Hydrolyzes single-stranded DNA or mismatched double-stranded DNA and polynucleotides, releasing free uracil.. Excises uracil residues from the DNA which can arise as a result of misincorporation of dUMP residues by DNA polymerase or due to deamination of cytosine. The chain is Uracil-DNA glycosylase from Latilactobacillus sakei subsp. sakei (strain 23K) (Lactobacillus sakei subsp. sakei).